Consider the following 219-residue polypeptide: Probable nicotinate-nucleotide adenylyltransferase (219 aa).

It belongs to the NadD family.

It catalyses the reaction nicotinate beta-D-ribonucleotide + ATP + H(+) = deamido-NAD(+) + diphosphate. Its pathway is cofactor biosynthesis; NAD(+) biosynthesis; deamido-NAD(+) from nicotinate D-ribonucleotide: step 1/1. Its function is as follows. Catalyzes the reversible adenylation of nicotinate mononucleotide (NaMN) to nicotinic acid adenine dinucleotide (NaAD). This Enterococcus faecalis (strain ATCC 700802 / V583) protein is Probable nicotinate-nucleotide adenylyltransferase.